Reading from the N-terminus, the 80-residue chain is Small ribosomal subunit protein bS16 (80 aa).

It belongs to the bacterial ribosomal protein bS16 family.

The protein is Small ribosomal subunit protein bS16 of Hydrogenovibrio crunogenus (strain DSM 25203 / XCL-2) (Thiomicrospira crunogena).